The following is a 470-amino-acid chain: Uronate isomerase (470 aa).

Belongs to the metallo-dependent hydrolases superfamily. Uronate isomerase family.

It carries out the reaction D-glucuronate = D-fructuronate. The enzyme catalyses aldehydo-D-galacturonate = keto-D-tagaturonate. It participates in carbohydrate metabolism; pentose and glucuronate interconversion. The polypeptide is Uronate isomerase (Vibrio parahaemolyticus serotype O3:K6 (strain RIMD 2210633)).